Reading from the N-terminus, the 403-residue chain is F-box only protein 22 (403 aa).

The residue at position 1 (M1) is an N-acetylmethionine. The F-box domain occupies 19 to 71; that stretch reads STFVLSNLAEVVERVLTFLPAKALLRVACVCRLWRECVRRVLRTHRSVTWISA. S128 is modified (phosphoserine). At K194 the chain carries N6-acetyllysine.

In terms of assembly, directly interacts with SKP1 and CUL1.

The protein resides in the cytoplasm. Its subcellular location is the myofibril. The protein localises to the sarcomere. It localises to the z line. Functionally, substrate-recognition component of the SCF (SKP1-CUL1-F-box protein)-type E3 ubiquitin ligase complex. Promotes the proteasome-dependent degradation of key sarcomeric proteins, such as alpha-actinin (ACTN2) and filamin-C (FLNC), essential for maintenance of normal contractile function. The protein is F-box only protein 22 (FBXO22) of Pongo abelii (Sumatran orangutan).